Consider the following 213-residue polypeptide: Uracil phosphoribosyltransferase (213 aa).

5-phospho-alpha-D-ribose 1-diphosphate-binding positions include Arg-78, Arg-103, and 130–138 (DPMLATGGS). Uracil is bound by residues Ile-197 and 202 to 204 (GDA). 5-phospho-alpha-D-ribose 1-diphosphate is bound at residue Asp-203.

It belongs to the UPRTase family. Mg(2+) serves as cofactor.

The catalysed reaction is UMP + diphosphate = 5-phospho-alpha-D-ribose 1-diphosphate + uracil. It functions in the pathway pyrimidine metabolism; UMP biosynthesis via salvage pathway; UMP from uracil: step 1/1. With respect to regulation, allosterically activated by GTP. In terms of biological role, catalyzes the conversion of uracil and 5-phospho-alpha-D-ribose 1-diphosphate (PRPP) to UMP and diphosphate. The protein is Uracil phosphoribosyltransferase of Cutibacterium acnes (strain DSM 16379 / KPA171202) (Propionibacterium acnes).